The chain runs to 70 residues: Alpha-toxin Bot9 (70 aa).

Residues 6-69 (RDGYIVYPNN…PIKDPSYKCY (64 aa)) form the LCN-type CS-alpha/beta domain. Cystine bridges form between cysteine 16–cysteine 68, cysteine 20–cysteine 40, cysteine 26–cysteine 50, and cysteine 30–cysteine 52.

It belongs to the long (4 C-C) scorpion toxin superfamily. Sodium channel inhibitor family. Alpha subfamily. Expressed by the venom gland.

The protein resides in the secreted. Alpha toxins bind voltage-independently at site-3 of sodium channels (Nav) and inhibit the inactivation of the activated channels, thereby blocking neuronal transmission. This toxin is active against rat Nav1.2/SCN2A and B.germanica Nav1. This chain is Alpha-toxin Bot9, found in Buthus occitanus tunetanus (Common European scorpion).